We begin with the raw amino-acid sequence, 166 residues long: Nucleotide-binding protein Acid_3194 (166 aa).

The protein belongs to the YajQ family.

In terms of biological role, nucleotide-binding protein. In Solibacter usitatus (strain Ellin6076), this protein is Nucleotide-binding protein Acid_3194.